A 1233-amino-acid polypeptide reads, in one-letter code: Capping protein-inhibiting regulator of actin dynamics (1233 aa).

3 positions are modified to phosphoserine: Ser-7, Ser-28, and Ser-132. 3 disordered regions span residues 92 to 136, 157 to 224, and 269 to 527; these read AENK…SAGT, AKHK…RRRQ, and LLEE…WQEV. The span at 157 to 176 shows a compositional bias: basic residues; that stretch reads AKHKLAVKPKKQRVSKKHRR. Composition is skewed to basic and acidic residues over residues 200–211, 282–293, 302–322, and 329–362; these read PGEDKPTWHEEE, EAERAPREEQQR, DAER…ERRR, and AEER…KRQE. A required for interaction with actin-capping proteins region spans residues 321 to 472; that stretch reads RRLQAQAQAE…EQQGRSGDFQ (152 aa). Composition is skewed to acidic residues over residues 363–376 and 397–407; these read EEEA…EQQE and EEEDLGEEEEE. At Ser-420 the chain carries Phosphoserine. Composition is skewed to basic and acidic residues over residues 432-447 and 505-527; these read DQER…HSEE and VERK…WQEV. The residue at position 556 (Ser-556) is a Phosphoserine. Thr-559 bears the Phosphothreonine mark. Disordered stretches follow at residues 560–586, 629–788, 815–1082, and 1097–1186; these read PAKD…HALP, HAEA…TTEG, EFTT…TEKV, and QKGF…ISDS. Over residues 677–707 the composition is skewed to basic and acidic residues; the sequence is KNAESDPRSSERDQLRPGDESTPRGRCDSRG. The segment covering 732 to 742 has biased composition (polar residues); that stretch reads GTETSKQSTEA. The span at 768–783 shows a compositional bias: basic and acidic residues; the sequence is ELGKGPEKSEMHREPA. Polar residues-rich tracts occupy residues 815–825 and 852–863; these read EFTTSSDSETA and TNYSLRFNCDQQ. Positions 876–889 are enriched in low complexity; the sequence is GDSADAGPPAAGSA. The segment covering 908–921 has biased composition (basic and acidic residues); it reads QERKQAPSTRRDSA. The segment covering 956 to 967 has biased composition (low complexity); that stretch reads PLAQKPALAPKP. At Thr-971 the chain carries Phosphothreonine. Phosphoserine is present on residues Ser-975 and Ser-1017. Basic and acidic residues predominate over residues 994-1040; sequence GRPDPEPSEPSKEDQESSDRRPPSPPGPEERKGQKRDEEEEATERKP. Over residues 1047–1057 the composition is skewed to polar residues; the sequence is ATQQEKPSQTP. Composition is skewed to basic and acidic residues over residues 1059-1082 and 1099-1124; these read AGRK…TEKV and GFRE…KLSK. Residues 1127-1139 are compositionally biased toward low complexity; it reads VSVSVQPGSSSVS. Residues 1151–1170 are compositionally biased toward basic and acidic residues; it reads PEEKRPETAVSRLERREQLK. Positions 1174–1183 are enriched in polar residues; that stretch reads TLPTSVTVEI.

In terms of assembly, directly interacts with actin-capping proteins CAPZA1, CAPZA2 and CAPZB; this interaction decreases the binding of capping proteins to actin. As to expression, expressed in intestinal epithelial cells (at protein level).

The protein localises to the cytoplasm. It is found in the cytosol. Involved in epithelial cell integrity by acting on the maintenance of the actin cytoskeleton. Positively regulates the actin polymerization, by inhibiting the interaction of actin-capping proteins with actin. The polypeptide is Capping protein-inhibiting regulator of actin dynamics (Homo sapiens (Human)).